Reading from the N-terminus, the 417-residue chain is UDP-N-acetylglucosamine 1-carboxyvinyltransferase (417 aa).

22–23 contributes to the phosphoenolpyruvate binding site; the sequence is KN. Arg-94 is a binding site for UDP-N-acetyl-alpha-D-glucosamine. Cys-118 serves as the catalytic Proton donor. Cys-118 bears the 2-(S-cysteinyl)pyruvic acid O-phosphothioketal mark. UDP-N-acetyl-alpha-D-glucosamine contacts are provided by residues 123–127, Asp-306, and Ile-328; that span reads RPIDQ.

Belongs to the EPSP synthase family. MurA subfamily.

The protein localises to the cytoplasm. The catalysed reaction is phosphoenolpyruvate + UDP-N-acetyl-alpha-D-glucosamine = UDP-N-acetyl-3-O-(1-carboxyvinyl)-alpha-D-glucosamine + phosphate. Its pathway is cell wall biogenesis; peptidoglycan biosynthesis. Cell wall formation. Adds enolpyruvyl to UDP-N-acetylglucosamine. The polypeptide is UDP-N-acetylglucosamine 1-carboxyvinyltransferase (Clostridium botulinum (strain ATCC 19397 / Type A)).